The primary structure comprises 134 residues: Ion transport peptide-like (134 aa).

3 disulfides stabilise this stretch: C62/C98, C78/C94, and C81/C107.

Belongs to the arthropod CHH/MIH/GIH/VIH hormone family.

The protein localises to the secreted. The protein is Ion transport peptide-like of Schistocerca gregaria (Desert locust).